A 428-amino-acid polypeptide reads, in one-letter code: Serine--tRNA ligase (428 aa).

231–233 is a binding site for L-serine; it reads TSE. ATP contacts are provided by residues 262–264 and Val278; that span reads RRE. L-serine is bound at residue Glu285. Residue 349–352 participates in ATP binding; sequence ELTS. Thr384 contributes to the L-serine binding site.

This sequence belongs to the class-II aminoacyl-tRNA synthetase family. Type-1 seryl-tRNA synthetase subfamily. In terms of assembly, homodimer. The tRNA molecule binds across the dimer.

The protein resides in the cytoplasm. It catalyses the reaction tRNA(Ser) + L-serine + ATP = L-seryl-tRNA(Ser) + AMP + diphosphate + H(+). The catalysed reaction is tRNA(Sec) + L-serine + ATP = L-seryl-tRNA(Sec) + AMP + diphosphate + H(+). The protein operates within aminoacyl-tRNA biosynthesis; selenocysteinyl-tRNA(Sec) biosynthesis; L-seryl-tRNA(Sec) from L-serine and tRNA(Sec): step 1/1. In terms of biological role, catalyzes the attachment of serine to tRNA(Ser). Is also able to aminoacylate tRNA(Sec) with serine, to form the misacylated tRNA L-seryl-tRNA(Sec), which will be further converted into selenocysteinyl-tRNA(Sec). The polypeptide is Serine--tRNA ligase (Bifidobacterium longum subsp. infantis (strain ATCC 15697 / DSM 20088 / JCM 1222 / NCTC 11817 / S12)).